The sequence spans 630 residues: Chaperone protein DnaK (630 aa).

T198 bears the Phosphothreonine; by autocatalysis mark. The segment at 604–630 is disordered; the sequence is AAAAPGEEAPKDDDVVDAEFSEVDDKK. The segment covering 617 to 630 has biased composition (acidic residues); that stretch reads DVVDAEFSEVDDKK.

Belongs to the heat shock protein 70 family.

Its function is as follows. Acts as a chaperone. The protein is Chaperone protein DnaK of Rhizorhabdus wittichii (strain DSM 6014 / CCUG 31198 / JCM 15750 / NBRC 105917 / EY 4224 / RW1) (Sphingomonas wittichii).